An 879-amino-acid chain; its full sequence is MKMLTRLQVLMLALFSKGFLVSLGDHNFMRREIKIEGDLVLGGLFPINEKGTGTEECGRINEDRGIQRLEAMLFAIDEINKDNYLLPGVKLGVHILDTCSRDTYALEQSLEFVRASLTKVDEAEYMCPDGSYAIQENIPLLIAGVIGGSYSSVSIQVANLLRLFQIPQISYASTSAKLSDKSRYDYFARTVPPDFYQAKAMAEILRYFNWTYVSTVASEGDYGETGIEAFEQEARLRNICIATAEKVGRSNIRKSYDSVIRELLQKPNARVVVLFMRSDDSRELIAAASRVNASFTWVASDGWGAQESIVKGSEHVAYGAITLELASHPVRQFDRYFQSLNPYNNHRNPWFRDFWEQKFQCSLQNKRNHRQICDKHLAIDSSNYEQESKIMFVVNAVYAMAHALHKMQRTLCPNTTKLCDAMKILDGKKLYKDYLLKINFTAPFNPNKGADSIVKFDTYGDGMGRYNVFNFQHIGGKYSYLKVGHWAETLYLDVDSIHWSRNSVPTSQCSDPCAPNEMKNMQPGDVCCWICIPCEPYEYLVDEFTCMDCGPGQWPTADLSGCYNLPEDYIRWEDAWAIGPVTIACLGFMCTCIVITVFIKHNNTPLVKASGRELCYILLFGVSLSYCMTFFFIAKPSPVICALRRLGLGTSFAICYSALLTKTNCIARIFDGVKNGAQRPKFISPSSQVFICLGLILVQIVMVSVWLILETPGTRRYTLPEKRETVILKCNVKDSSMLISLTYDVVLVILCTVYAFKTRKCPENFNEAKFIGFTMYTTCIIWLAFLPIFYVTSSDYRVQTTTMCISVSLSGFVVLGCLFAPKVHIVLFQPQKNVVTHRLHLNRFSVSGTATTYSQSSASTYVPTVCNGREVLDSTTSSL.

The signal sequence occupies residues 1–22; the sequence is MKMLTRLQVLMLALFSKGFLVS. Residues 23–576 are Extracellular-facing; sequence LGDHNFMRRE…EDYIRWEDAW (554 aa). Cys57 and Cys99 are oxidised to a cystine. L-glutamate is bound by residues Ser151 and 172 to 174; that span reads AST. Asn209 carries an N-linked (GlcNAc...) asparagine glycan. Tyr222 lines the L-glutamate pocket. 7 disulfides stabilise this stretch: Cys240/Cys527, Cys361/Cys373, Cys412/Cys419, Cys509/Cys528, Cys513/Cys531, Cys534/Cys546, and Cys549/Cys562. An N-linked (GlcNAc...) asparagine glycan is attached at Asn292. Residue Asp301 coordinates L-glutamate. An L-glutamate-binding site is contributed by Lys389. N-linked (GlcNAc...) asparagine glycans are attached at residues Asn414 and Asn439. Residues 577-599 traverse the membrane as a helical segment; that stretch reads AIGPVTIACLGFMCTCIVITVFI. Residues 600-613 lie on the Cytoplasmic side of the membrane; it reads KHNNTPLVKASGRE. The chain crosses the membrane as a helical span at residues 614–634; that stretch reads LCYILLFGVSLSYCMTFFFIA. The Extracellular segment spans residues 635–645; the sequence is KPSPVICALRR. The helical transmembrane segment at 646 to 664 threads the bilayer; sequence LGLGTSFAICYSALLTKTN. Residues 665-688 are Cytoplasmic-facing; sequence CIARIFDGVKNGAQRPKFISPSSQ. The helical transmembrane segment at 689 to 709 threads the bilayer; the sequence is VFICLGLILVQIVMVSVWLIL. Topologically, residues 710-734 are extracellular; sequence ETPGTRRYTLPEKRETVILKCNVKD. The helical transmembrane segment at 735 to 756 threads the bilayer; the sequence is SSMLISLTYDVVLVILCTVYAF. At 757–769 the chain is on the cytoplasmic side; sequence KTRKCPENFNEAK. Residues 770-792 form a helical membrane-spanning segment; the sequence is FIGFTMYTTCIIWLAFLPIFYVT. Residues 793-802 lie on the Extracellular side of the membrane; the sequence is SSDYRVQTTT. A helical transmembrane segment spans residues 803 to 828; it reads MCISVSLSGFVVLGCLFAPKVHIVLF. The Cytoplasmic portion of the chain corresponds to 829 to 879; it reads QPQKNVVTHRLHLNRFSVSGTATTYSQSSASTYVPTVCNGREVLDSTTSSL.

It belongs to the G-protein coupled receptor 3 family. In terms of assembly, interacts with TAMALIN.

The protein localises to the cell membrane. Its function is as follows. G-protein coupled receptor for glutamate. Ligand binding causes a conformation change that triggers signaling via guanine nucleotide-binding proteins (G proteins) and modulates the activity of down-stream effectors. Signaling inhibits adenylate cyclase activity. This Mus musculus (Mouse) protein is Metabotropic glutamate receptor 3 (Grm3).